The sequence spans 364 residues: tRNA-specific 2-thiouridylase MnmA 1 (364 aa).

Residues Gly11 to Ser18 and Phe37 each bind ATP. The active-site Nucleophile is Cys96. Residues Cys96 and Cys193 are joined by a disulfide bond. Gly120 is a binding site for ATP. The interaction with tRNA stretch occupies residues Lys142 to Gln144. The Cysteine persulfide intermediate role is filled by Cys193. Positions Arg309–Tyr310 are interaction with tRNA.

It belongs to the MnmA/TRMU family.

It is found in the cytoplasm. It catalyses the reaction S-sulfanyl-L-cysteinyl-[protein] + uridine(34) in tRNA + AH2 + ATP = 2-thiouridine(34) in tRNA + L-cysteinyl-[protein] + A + AMP + diphosphate + H(+). Catalyzes the 2-thiolation of uridine at the wobble position (U34) of tRNA, leading to the formation of s(2)U34. This chain is tRNA-specific 2-thiouridylase MnmA 1, found in Bacteroides fragilis (strain ATCC 25285 / DSM 2151 / CCUG 4856 / JCM 11019 / LMG 10263 / NCTC 9343 / Onslow / VPI 2553 / EN-2).